Reading from the N-terminus, the 143-residue chain is Ribosome maturation factor RimP (143 aa).

Belongs to the RimP family.

The protein localises to the cytoplasm. In terms of biological role, required for maturation of 30S ribosomal subunits. The polypeptide is Ribosome maturation factor RimP (Borrelia turicatae (strain 91E135)).